A 118-amino-acid polypeptide reads, in one-letter code: Large ribosomal subunit protein bL20 (118 aa).

Belongs to the bacterial ribosomal protein bL20 family.

Binds directly to 23S ribosomal RNA and is necessary for the in vitro assembly process of the 50S ribosomal subunit. It is not involved in the protein synthesizing functions of that subunit. This is Large ribosomal subunit protein bL20 from Macrococcus caseolyticus (strain JCSC5402) (Macrococcoides caseolyticum).